A 396-amino-acid polypeptide reads, in one-letter code: Phosphopentomutase (396 aa).

6 residues coordinate Mn(2+): Asp13, Asp288, His293, Asp329, His330, and His341.

This sequence belongs to the phosphopentomutase family. It depends on Mn(2+) as a cofactor.

Its subcellular location is the cytoplasm. The catalysed reaction is 2-deoxy-alpha-D-ribose 1-phosphate = 2-deoxy-D-ribose 5-phosphate. It carries out the reaction alpha-D-ribose 1-phosphate = D-ribose 5-phosphate. It functions in the pathway carbohydrate degradation; 2-deoxy-D-ribose 1-phosphate degradation; D-glyceraldehyde 3-phosphate and acetaldehyde from 2-deoxy-alpha-D-ribose 1-phosphate: step 1/2. In terms of biological role, isomerase that catalyzes the conversion of deoxy-ribose 1-phosphate (dRib-1-P) and ribose 1-phosphate (Rib-1-P) to deoxy-ribose 5-phosphate (dRib-5-P) and ribose 5-phosphate (Rib-5-P), respectively. The chain is Phosphopentomutase from Clostridium perfringens (strain ATCC 13124 / DSM 756 / JCM 1290 / NCIMB 6125 / NCTC 8237 / Type A).